Consider the following 355-residue polypeptide: GTPase Obg (355 aa).

The Obg domain maps to 1–159; it reads MKFLDEAKVY…KTIWLRLKLI (159 aa). In terms of domain architecture, OBG-type G spans 160–327; that stretch reads ADAGLVGLPN…ALRALRDIIV (168 aa). GTP is bound by residues 166–173, 191–195, 212–215, 279–282, and 308–310; these read GLPNAGKS, FTTLH, DIPG, SQID, and SAA. Residues S173 and T193 each contribute to the Mg(2+) site. Residues 333 to 355 form a disordered region; the sequence is GDTALPDRSMPHESEVEEEDDRL.

This sequence belongs to the TRAFAC class OBG-HflX-like GTPase superfamily. OBG GTPase family. In terms of assembly, monomer. It depends on Mg(2+) as a cofactor.

It is found in the cytoplasm. An essential GTPase which binds GTP, GDP and possibly (p)ppGpp with moderate affinity, with high nucleotide exchange rates and a fairly low GTP hydrolysis rate. Plays a role in control of the cell cycle, stress response, ribosome biogenesis and in those bacteria that undergo differentiation, in morphogenesis control. In Agrobacterium fabrum (strain C58 / ATCC 33970) (Agrobacterium tumefaciens (strain C58)), this protein is GTPase Obg.